Reading from the N-terminus, the 475-residue chain is Aspartate ammonia-lyase (475 aa).

The L-aspartate site is built by Thr104, Ser143, Thr144, Asn145, Thr190, and His191. The tract at residues Gly320 to Asn329 is SS loop. Ser321 acts as the Proton acceptor in catalysis. Residues Ser322 and Lys327 each contribute to the L-aspartate site.

It belongs to the class-II fumarase/aspartase family. Aspartase subfamily. As to quaternary structure, homotetramer.

It catalyses the reaction L-aspartate = fumarate + NH4(+). Functionally, catalyzes the reversible conversion of L-aspartate to fumarate and ammonia. The sequence is that of Aspartate ammonia-lyase from Bacillus subtilis (strain 168).